The chain runs to 339 residues: Heat-inducible transcription repressor HrcA (339 aa).

This sequence belongs to the HrcA family.

Functionally, negative regulator of class I heat shock genes (grpE-dnaK-dnaJ and groELS operons). Prevents heat-shock induction of these operons. The chain is Heat-inducible transcription repressor HrcA from Cutibacterium acnes (strain DSM 16379 / KPA171202) (Propionibacterium acnes).